Consider the following 129-residue polypeptide: Large ribosomal subunit protein bL20 (129 aa).

The protein belongs to the bacterial ribosomal protein bL20 family.

Functionally, binds directly to 23S ribosomal RNA and is necessary for the in vitro assembly process of the 50S ribosomal subunit. It is not involved in the protein synthesizing functions of that subunit. This Mycobacterium leprae (strain Br4923) protein is Large ribosomal subunit protein bL20.